A 567-amino-acid polypeptide reads, in one-letter code: DNA ligase (567 aa).

Glutamate 246 contacts ATP. Lysine 248 acts as the N6-AMP-lysine intermediate in catalysis. 6 residues coordinate ATP: arginine 253, arginine 268, glutamate 298, phenylalanine 339, arginine 415, and lysine 421.

It belongs to the ATP-dependent DNA ligase family. It depends on Mg(2+) as a cofactor.

The catalysed reaction is ATP + (deoxyribonucleotide)n-3'-hydroxyl + 5'-phospho-(deoxyribonucleotide)m = (deoxyribonucleotide)n+m + AMP + diphosphate.. Functionally, DNA ligase that seals nicks in double-stranded DNA during DNA replication, DNA recombination and DNA repair. This is DNA ligase from Nanoarchaeum equitans (strain Kin4-M).